The sequence spans 249 residues: uncharacterized protein (249 aa).

The protein belongs to the AIM2 family.

Its subcellular location is the cytoplasm. The protein resides in the nucleus. This is an uncharacterized protein from Schizosaccharomyces pombe (strain 972 / ATCC 24843) (Fission yeast).